Here is a 132-residue protein sequence, read N- to C-terminus: Transcription antitermination protein NusB (132 aa).

Belongs to the NusB family.

Involved in transcription antitermination. Required for transcription of ribosomal RNA (rRNA) genes. Binds specifically to the boxA antiterminator sequence of the ribosomal RNA (rrn) operons. The protein is Transcription antitermination protein NusB of Sulfurimonas denitrificans (strain ATCC 33889 / DSM 1251) (Thiomicrospira denitrificans (strain ATCC 33889 / DSM 1251)).